The following is a 460-amino-acid chain: Cysteine--tRNA ligase (460 aa).

C28 serves as a coordination point for Zn(2+). The 'HIGH' region motif lies at 30 to 40 (MTVYDYCHLGH). Positions 209, 234, and 238 each coordinate Zn(2+). The short motif at 266-270 (KMSKS) is the 'KMSKS' region element. Residue K269 coordinates ATP.

This sequence belongs to the class-I aminoacyl-tRNA synthetase family. As to quaternary structure, monomer. It depends on Zn(2+) as a cofactor.

The protein resides in the cytoplasm. The enzyme catalyses tRNA(Cys) + L-cysteine + ATP = L-cysteinyl-tRNA(Cys) + AMP + diphosphate. The sequence is that of Cysteine--tRNA ligase from Pseudomonas aeruginosa (strain UCBPP-PA14).